A 153-amino-acid polypeptide reads, in one-letter code: CRIB domain-containing protein RIC4 (153 aa).

The CRIB domain maps to 99–112; it reads IGVPTNVKHVSHIG.

As to quaternary structure, interacts with ARAC4/ROP2 and ARAC11/ROP1. As to expression, expressed in roots, leaves, stems, flowers, siliques and pollen.

The protein resides in the cell membrane. Its function is as follows. Functions as a downstream effector of Rho-related GTP binding proteins of the 'Rho of Plants' (ROPs) family. Participates in the propagation of ROP GTPase signals in specific cellular responses. Required for actin cortical microfilament assembly. Activated by ARAC4/ROP2 to promote the assembly of cortical actin microfilaments required for lobe formation and lateral expansion of pavement cells. Interaction with, and activation by ARAC4/ROP2 is inhibited by RIC1. Functions as a downstream effector of ARAC11/ROP1 to promote the assembly of apical F-actin associated with vesicle accumulation in the tip of the growing pollen tube. Counteracts the ARAC11/ROP1-RIC3 pathway, which activates calcium signaling that leads to apical F-actin disassembly associated with exocytosis, to control actin dynamics and pollen tube apical growth. Downstream of ARAC11/ROP1, is involved in the growth responses to the root-colonizing endophytic fungus P.indica. The polypeptide is CRIB domain-containing protein RIC4 (RIC4) (Arabidopsis thaliana (Mouse-ear cress)).